We begin with the raw amino-acid sequence, 930 residues long: Protein translocase subunit SecA (930 aa).

ATP-binding positions include glutamine 87, 105–109, and aspartate 515; that span reads GEGKT. Cysteine 914, cysteine 916, cysteine 925, and histidine 926 together coordinate Zn(2+).

It belongs to the SecA family. Monomer and homodimer. Part of the essential Sec protein translocation apparatus which comprises SecA, SecYEG and auxiliary proteins SecDF-YajC and YidC. Zn(2+) serves as cofactor.

Its subcellular location is the cell inner membrane. It localises to the cytoplasm. The enzyme catalyses ATP + H2O + cellular proteinSide 1 = ADP + phosphate + cellular proteinSide 2.. In terms of biological role, part of the Sec protein translocase complex. Interacts with the SecYEG preprotein conducting channel. Has a central role in coupling the hydrolysis of ATP to the transfer of proteins into and across the cell membrane, serving both as a receptor for the preprotein-SecB complex and as an ATP-driven molecular motor driving the stepwise translocation of polypeptide chains across the membrane. This Burkholderia thailandensis (strain ATCC 700388 / DSM 13276 / CCUG 48851 / CIP 106301 / E264) protein is Protein translocase subunit SecA.